Here is a 269-residue protein sequence, read N- to C-terminus: Ribonuclease HII (269 aa).

An RNase H type-2 domain is found at 83–269 (YLIAGVDEVG…HRMSFLTNIL (187 aa)). A divalent metal cation-binding residues include aspartate 89, glutamate 90, and aspartate 185.

Belongs to the RNase HII family. The cofactor is Mn(2+). Mg(2+) is required as a cofactor.

The protein resides in the cytoplasm. It catalyses the reaction Endonucleolytic cleavage to 5'-phosphomonoester.. Functionally, endonuclease that specifically degrades the RNA of RNA-DNA hybrids. This Clostridium botulinum (strain Hall / ATCC 3502 / NCTC 13319 / Type A) protein is Ribonuclease HII.